Reading from the N-terminus, the 238-residue chain is Demethylmenaquinone methyltransferase (238 aa).

Residues Thr65, Asp85, and 109-110 (DA) contribute to the S-adenosyl-L-methionine site.

The protein belongs to the class I-like SAM-binding methyltransferase superfamily. MenG/UbiE family.

It catalyses the reaction a 2-demethylmenaquinol + S-adenosyl-L-methionine = a menaquinol + S-adenosyl-L-homocysteine + H(+). It participates in quinol/quinone metabolism; menaquinone biosynthesis; menaquinol from 1,4-dihydroxy-2-naphthoate: step 2/2. Functionally, methyltransferase required for the conversion of demethylmenaquinol (DMKH2) to menaquinol (MKH2). This chain is Demethylmenaquinone methyltransferase, found in Roseiflexus sp. (strain RS-1).